Consider the following 501-residue polypeptide: DEAD-box ATP-dependent RNA helicase 20 (501 aa).

2 stretches are compositionally biased toward basic and acidic residues: residues 1 to 20 (MSRY…RRSD) and 38 to 53 (SKKD…KLDL). The interval 1–53 (MSRYDSRTGDSTSYRDRRSDSGFGGTSSYGSSGSHTSSKKDNDGNESPRKLDL) is disordered. Residues 99–127 (KSFRDVGFPDYVLEEVKKAGFTEPTPIQS) carry the Q motif motif. Residues 130–305 (WPMAMKGRDL…KKFLYNPYKV (176 aa)) form the Helicase ATP-binding domain. ATP is bound at residue 143 to 150 (AETGSGKT). The DEAD box motif lies at 253 to 256 (DEAD). The Helicase C-terminal domain occupies 333–478 (KLVKLLEDIM…KVSPELASMG (146 aa)). The disordered stretch occupies residues 473–501 (ELASMGRSTAPPPPGLGGFRDRGSRRGWS). The span at 491–501 (FRDRGSRRGWS) shows a compositional bias: basic and acidic residues.

Belongs to the DEAD box helicase family. DDX5/DBP2 subfamily.

It is found in the nucleus. It catalyses the reaction ATP + H2O = ADP + phosphate + H(+). In terms of biological role, ATP-dependent RNA helicase involved nonsense-mediated mRNA decay and ribosome biogenesis through rRNA processing. The sequence is that of DEAD-box ATP-dependent RNA helicase 20 (RH20) from Arabidopsis thaliana (Mouse-ear cress).